The sequence spans 129 residues: Replication initiation control protein YabA (129 aa).

The Zn(2+) site is built by histidine 103, cysteine 105, cysteine 119, and cysteine 122.

This sequence belongs to the YabA family. As to quaternary structure, homotetramer. Interacts with both DnaA and DnaN, acting as a bridge between these two proteins. Requires Zn(2+) as cofactor.

Its subcellular location is the cytoplasm. The protein resides in the nucleoid. Its function is as follows. Involved in control of chromosome replication initiation. Inhibits the cooperative binding of DnaA to the oriC region, thus negatively regulating initiation of chromosome replication. Inhibits the ability of DnaA-ATP to form a helix on DNA; does not disassemble preformed DnaA-DNA helices. Decreases the residence time of DnaA on the chromosome at its binding sites (oriC, replication forks and promoter-binding sites). Tethers DnaA to the replication machinery via the DNA polymerase beta sliding clamp subunit (dnaN). Associates with oriC and other DnaA targets on the chromosome in a DnaA-dependent manner. This chain is Replication initiation control protein YabA, found in Listeria innocua serovar 6a (strain ATCC BAA-680 / CLIP 11262).